Reading from the N-terminus, the 101-residue chain is Large ribosomal subunit protein uL24 (101 aa).

The protein belongs to the universal ribosomal protein uL24 family. As to quaternary structure, part of the 50S ribosomal subunit.

Functionally, one of two assembly initiator proteins, it binds directly to the 5'-end of the 23S rRNA, where it nucleates assembly of the 50S subunit. One of the proteins that surrounds the polypeptide exit tunnel on the outside of the subunit. The chain is Large ribosomal subunit protein uL24 from Elusimicrobium minutum (strain Pei191).